Here is a 134-residue protein sequence, read N- to C-terminus: Large ribosomal subunit protein eL14y (134 aa).

The protein belongs to the eukaryotic ribosomal protein eL14 family.

The polypeptide is Large ribosomal subunit protein eL14y (RPL14B) (Arabidopsis thaliana (Mouse-ear cress)).